A 327-amino-acid chain; its full sequence is Immunodominant envelope protein p35 (327 aa).

Positions 41-69 are disordered; the sequence is KNGYDDYRDPPSPKPLPKSKQEPNADDKV. Over residues 59–69 the composition is skewed to basic and acidic residues; the sequence is SKQEPNADDKV. A helical membrane pass occupies residues 291–311; it reads ITMMFLIAIVIIIGLAIFDIN.

This sequence belongs to the poxviruses protein p35 family.

It localises to the virion membrane. Envelope protein that binds to the cell surface to provide virion attachment to target cell. In Fowlpox virus (strain NVSL) (FPV), this protein is Immunodominant envelope protein p35.